Reading from the N-terminus, the 290-residue chain is Cytochrome bo(3) ubiquinol oxidase subunit 2 (290 aa).

The N-terminal stretch at 1–24 is a signal peptide; sequence MISINFNNFFKTLLLILIAFTLHG. Residue Cys25 is the site of N-palmitoyl cysteine attachment. Cys25 carries the S-diacylglycerol cysteine lipid modification. The Extracellular segment spans residues 25 to 42; the sequence is CDSILFNPHGIIAIQECS. Residues 43–63 form a helical membrane-spanning segment; that stretch reads ILLISFLIMLFVIIPVIFMTI. The Cytoplasmic segment spans residues 64-87; sequence YFSVKYRASNINAKYKPDWCDSKK. Residues 88-108 traverse the membrane as a helical segment; that stretch reads IEIIVWTIPISIILFLAFVTW. The Extracellular segment spans residues 109–290; it reads NYSHILDPKK…TYSKNKVFKH (182 aa).

It belongs to the cytochrome c oxidase subunit 2 family. As to quaternary structure, heterooctamer of two A chains, two B chains, two C chains and two D chains.

It is found in the cell membrane. Functionally, cytochrome bo(3) ubiquinol terminal oxidase is the component of the aerobic respiratory chain of E.coli that predominates when cells are grown at high aeration. Has proton pump activity across the membrane in addition to electron transfer, pumping 2 protons/electron. The sequence is that of Cytochrome bo(3) ubiquinol oxidase subunit 2 (cyoA) from Buchnera aphidicola subsp. Schizaphis graminum (strain Sg).